The sequence spans 696 residues: Elongation factor G (696 aa).

Residues 8 to 282 (KDYRNIGIMA…AVVDYLPSPL (275 aa)) form the tr-type G domain. GTP-binding positions include 17-24 (AHIDAGKT), 81-85 (DTPGH), and 135-138 (NKMD).

It belongs to the TRAFAC class translation factor GTPase superfamily. Classic translation factor GTPase family. EF-G/EF-2 subfamily.

The protein resides in the cytoplasm. Catalyzes the GTP-dependent ribosomal translocation step during translation elongation. During this step, the ribosome changes from the pre-translocational (PRE) to the post-translocational (POST) state as the newly formed A-site-bound peptidyl-tRNA and P-site-bound deacylated tRNA move to the P and E sites, respectively. Catalyzes the coordinated movement of the two tRNA molecules, the mRNA and conformational changes in the ribosome. This Mycoplasmopsis synoviae (strain 53) (Mycoplasma synoviae) protein is Elongation factor G.